Consider the following 269-residue polypeptide: Phosphonates import ATP-binding protein PhnC 2 (269 aa).

The 245-residue stretch at 2-246 (LRIDSLSKRY…VLNEIYGEED (245 aa)) folds into the ABC transporter domain. 35–42 (GPSGAGKS) is an ATP binding site. The tract at residues 246 to 269 (DWNASGPAQDSEENEAVSAGVATH) is disordered.

This sequence belongs to the ABC transporter superfamily. Phosphonates importer (TC 3.A.1.9.1) family. As to quaternary structure, the complex is composed of two ATP-binding proteins (PhnC), two transmembrane proteins (PhnE) and a solute-binding protein (PhnD).

The protein resides in the cell inner membrane. It catalyses the reaction phosphonate(out) + ATP + H2O = phosphonate(in) + ADP + phosphate + H(+). Its function is as follows. Part of the ABC transporter complex PhnCDE involved in phosphonates import. Responsible for energy coupling to the transport system. The polypeptide is Phosphonates import ATP-binding protein PhnC 2 (Synechococcus sp. (strain JA-2-3B'a(2-13)) (Cyanobacteria bacterium Yellowstone B-Prime)).